Reading from the N-terminus, the 374-residue chain is Calcium/calmodulin-dependent protein kinase type 1 (374 aa).

In terms of domain architecture, Protein kinase spans 20–276 (YDFRDVLGTG…CEQALQHPWI (257 aa)). ATP contacts are provided by residues 26 to 34 (LGTGAFSEV) and K49. Residue K59 forms a Glycyl lysine isopeptide (Lys-Gly) (interchain with G-Cter in ubiquitin) linkage. Catalysis depends on D141, which acts as the Proton acceptor. At T177 the chain carries Phosphothreonine; by CaMKK1 and CaMKK2. An autoinhibitory domain region spans residues 276–316 (IAGDTALDKNIHQSVSEQIKKNFAKSKWKQAFNATAVVRHM). Residues 296 to 317 (KNFAKSKWKQAFNATAVVRHMR) are calmodulin-binding. The short motif at 315-321 (HMRKLQL) is the Nuclear export signal element.

The protein belongs to the protein kinase superfamily. CAMK Ser/Thr protein kinase family. CaMK subfamily. Monomer. Interacts with XPO1. Post-translationally, phosphorylated by CaMKK1 and CaMKK2 on Thr-177. In terms of processing, polybiquitinated by the E3 ubiquitin-protein ligase complex SCF(FBXL12), leading to proteasomal degradation. As to expression, ubiquitous.

The protein localises to the cytoplasm. The protein resides in the nucleus. The catalysed reaction is L-seryl-[protein] + ATP = O-phospho-L-seryl-[protein] + ADP + H(+). It carries out the reaction L-threonyl-[protein] + ATP = O-phospho-L-threonyl-[protein] + ADP + H(+). Its activity is regulated as follows. Activated by Ca(2+)/calmodulin. Binding of calmodulin results in conformational change that relieves intrasteric autoinhibition and allows phosphorylation of Thr-177 within the activation loop by CaMKK1 or CaMKK2. Phosphorylation of Thr-177 results in several fold increase in total activity. Unlike CaMK4, is unable to exhibit autonomous activity after Ca(2+)/calmodulin activation. Calcium/calmodulin-dependent protein kinase that operates in the calcium-triggered CaMKK-CaMK1 signaling cascade and, upon calcium influx, regulates transcription activators activity, cell cycle, hormone production, cell differentiation, actin filament organization and neurite outgrowth. Recognizes the substrate consensus sequence [MVLIF]-x-R-x(2)-[ST]-x(3)-[MVLIF]. Regulates axonal extension and growth cone motility in hippocampal and cerebellar nerve cells. Upon NMDA receptor-mediated Ca(2+) elevation, promotes dendritic growth in hippocampal neurons and is essential in synapses for full long-term potentiation (LTP) and ERK2-dependent translational activation. Downstream of NMDA receptors, promotes the formation of spines and synapses in hippocampal neurons by phosphorylating ARHGEF7/BETAPIX on 'Ser-673', which results in the enhancement of ARHGEF7 activity and activation of RAC1. Promotes neuronal differentiation and neurite outgrowth by activation and phosphorylation of MARK2 on 'Ser-91', 'Ser-92', 'Ser-93' and 'Ser-294'. Promotes nuclear export of HDAC5 and binding to 14-3-3 by phosphorylation of 'Ser-259' and 'Ser-498' in the regulation of muscle cell differentiation. Regulates NUMB-mediated endocytosis by phosphorylation of NUMB on 'Ser-276' and 'Ser-295'. Involved in the regulation of basal and estrogen-stimulated migration of medulloblastoma cells through ARHGEF7/BETAPIX phosphorylation. Is required for proper activation of cyclin-D1/CDK4 complex during G1 progression in diploid fibroblasts. Plays a role in K(+) and ANG2-mediated regulation of the aldosterone synthase (CYP11B2) to produce aldosterone in the adrenal cortex. Phosphorylates EIF4G3/eIF4GII. In vitro phosphorylates CREB1, ATF1, CFTR, MYL9 and SYN1/synapsin I. This chain is Calcium/calmodulin-dependent protein kinase type 1 (Camk1), found in Mus musculus (Mouse).